The primary structure comprises 289 residues: Thymidylate synthase (289 aa).

Residues arginine 21 and 150–151 contribute to the dUMP site; that span reads RR. Catalysis depends on cysteine 170, which acts as the Nucleophile. Residues 191–194, asparagine 202, and 232–234 contribute to the dUMP site; these read RSGD and HIY. Aspartate 194 lines the (6R)-5,10-methylene-5,6,7,8-tetrahydrofolate pocket. Alanine 288 contacts (6R)-5,10-methylene-5,6,7,8-tetrahydrofolate.

It belongs to the thymidylate synthase family. Bacterial-type ThyA subfamily. As to quaternary structure, homodimer.

The protein localises to the cytoplasm. It catalyses the reaction dUMP + (6R)-5,10-methylene-5,6,7,8-tetrahydrofolate = 7,8-dihydrofolate + dTMP. It functions in the pathway pyrimidine metabolism; dTTP biosynthesis. In terms of biological role, catalyzes the reductive methylation of 2'-deoxyuridine-5'-monophosphate (dUMP) to 2'-deoxythymidine-5'-monophosphate (dTMP) while utilizing 5,10-methylenetetrahydrofolate (mTHF) as the methyl donor and reductant in the reaction, yielding dihydrofolate (DHF) as a by-product. This enzymatic reaction provides an intracellular de novo source of dTMP, an essential precursor for DNA biosynthesis. The polypeptide is Thymidylate synthase (Mycoplasmopsis synoviae (strain 53) (Mycoplasma synoviae)).